A 104-amino-acid chain; its full sequence is Large ribosomal subunit protein uL24 (104 aa).

Belongs to the universal ribosomal protein uL24 family. In terms of assembly, part of the 50S ribosomal subunit.

In terms of biological role, one of two assembly initiator proteins, it binds directly to the 5'-end of the 23S rRNA, where it nucleates assembly of the 50S subunit. Its function is as follows. One of the proteins that surrounds the polypeptide exit tunnel on the outside of the subunit. The sequence is that of Large ribosomal subunit protein uL24 from Buchnera aphidicola subsp. Schizaphis graminum (strain Sg).